A 305-amino-acid chain; its full sequence is Aquaporin NIP6-1 (305 aa).

Residues 1–30 are disordered; the sequence is MDHEEIPSTPSTPATTPGTPGAPLFGGFEG. Residues 7–23 are compositionally biased toward low complexity; the sequence is PSTPSTPATTPGTPGAP. The next 2 helical transmembrane spans lie at 82-102 and 111-131; these read LGAE…TAIV and TLIG…LSTG. The short motif at 139 to 141 is the NPA 1 element; that stretch reads NPA. 3 helical membrane-spanning segments follow: residues 159-179, 194-214, and 221-241; these read VYIG…KAVF, LSQA…VVTA, and AVGE…ILIA. The NPA 2 signature appears at 250-252; the sequence is NPV. A helical transmembrane segment spans residues 267–287; sequence IWVYLTAPILGALIGAGTYTI. Phosphoserine is present on serine 302.

The protein belongs to the MIP/aquaporin (TC 1.A.8) family. NIP (TC 1.A.8.12) subfamily. As to expression, expressed in roots.

The protein localises to the membrane. Its function is as follows. Transports glycerol, urea and formamide, in Xenopus laevis oocytes. Very low water transport activity. The chain is Aquaporin NIP6-1 (NIP6-1) from Arabidopsis thaliana (Mouse-ear cress).